Consider the following 559-residue polypeptide: Glucose-6-phosphate isomerase (559 aa).

E352 functions as the Proton donor in the catalytic mechanism. Residues H383 and K511 contribute to the active site.

This sequence belongs to the GPI family.

It localises to the cytoplasm. The enzyme catalyses alpha-D-glucose 6-phosphate = beta-D-fructose 6-phosphate. Its pathway is carbohydrate biosynthesis; gluconeogenesis. The protein operates within carbohydrate degradation; glycolysis; D-glyceraldehyde 3-phosphate and glycerone phosphate from D-glucose: step 2/4. Functionally, catalyzes the reversible isomerization of glucose-6-phosphate to fructose-6-phosphate. The chain is Glucose-6-phosphate isomerase from Chlorobaculum tepidum (strain ATCC 49652 / DSM 12025 / NBRC 103806 / TLS) (Chlorobium tepidum).